A 257-amino-acid polypeptide reads, in one-letter code: V-type proton ATPase subunit D (257 aa).

The interval Lys-215–Asn-257 is disordered.

This sequence belongs to the V-ATPase D subunit family. V-ATPase is a heteromultimeric enzyme made up of two complexes: the ATP-hydrolytic V1 complex and the proton translocation V0 complex. The V1 complex consists of three catalytic AB heterodimers that form a heterohexamer, three peripheral stalks each consisting of EG heterodimers, one central rotor including subunits D and F, and the regulatory subunits C and H. The proton translocation complex V0 consists of the proton transport subunit a, a ring of proteolipid subunits c9c'', rotary subunit d, subunits e and f, and the accessory subunits vah-19/Ac45 and vah-20/PRR.

Its function is as follows. Subunit of the V1 complex of vacuolar(H+)-ATPase (V-ATPase), a multisubunit enzyme composed of a peripheral complex (V1) that hydrolyzes ATP and a membrane integral complex (V0) that translocates protons. V-ATPase is responsible for acidifying and maintaining the pH of intracellular compartments and in some cell types, is targeted to the plasma membrane, where it is responsible for acidifying the extracellular environment. This chain is V-type proton ATPase subunit D, found in Caenorhabditis elegans.